Reading from the N-terminus, the 416-residue chain is MKIYLVGGAVRDSLLNLPIKDKDYLVVGATPEQMLQLGYRQVGKDFPVFLHPKNQQEYALARTERKIGLGYGGFSCHASPDVTLEQDLLRRDLTINAIAQDEKGNLYDPFNGIEDINARLLRHVSDAFVEDPLRVLRVARFAARFHALGFHIAAETLALMRQISASDELNALTAERVWQEVDKSLGGPHPEVFFEVLHQCGALEVLFPEIFALFGVPQPEKWHPEIDTGVHTLMVLAQAALLTEDKSVRFAALVHDLGKALSPKEHLPKHHGHGQKGLPLIKALCTRLRVPNETRDLALLVSDQHQNVHQAFELRAETIVKIFDKADFWRKPERLTQLILACTADMRGRTGFENNLYPQGEYLTQCFLAANNVDIAAIIAAGFQGAEIKQALNLRRIEAVSQFKQKMQTKLPTDER.

Glycine 8 and arginine 11 together coordinate ATP. Positions 8 and 11 each coordinate CTP. Residues aspartate 21 and aspartate 23 each contribute to the Mg(2+) site. ATP is bound by residues arginine 91, arginine 137, and arginine 140. CTP contacts are provided by arginine 91, arginine 137, and arginine 140. An HD domain is found at 228–329 (TGVHTLMVLA…VKIFDKADFW (102 aa)).

It belongs to the tRNA nucleotidyltransferase/poly(A) polymerase family. Bacterial CCA-adding enzyme type 1 subfamily. As to quaternary structure, monomer. Can also form homodimers and oligomers. It depends on Mg(2+) as a cofactor. Ni(2+) is required as a cofactor.

It carries out the reaction a tRNA precursor + 2 CTP + ATP = a tRNA with a 3' CCA end + 3 diphosphate. The enzyme catalyses a tRNA with a 3' CCA end + 2 CTP + ATP = a tRNA with a 3' CCACCA end + 3 diphosphate. Catalyzes the addition and repair of the essential 3'-terminal CCA sequence in tRNAs without using a nucleic acid template. Adds these three nucleotides in the order of C, C, and A to the tRNA nucleotide-73, using CTP and ATP as substrates and producing inorganic pyrophosphate. tRNA 3'-terminal CCA addition is required both for tRNA processing and repair. Also involved in tRNA surveillance by mediating tandem CCA addition to generate a CCACCA at the 3' terminus of unstable tRNAs. While stable tRNAs receive only 3'-terminal CCA, unstable tRNAs are marked with CCACCA and rapidly degraded. This Shewanella baltica (strain OS185) protein is Multifunctional CCA protein.